A 636-amino-acid chain; its full sequence is Signal recognition particle receptor subunit alpha (636 aa).

3 disordered regions span residues 132–205, 217–246, and 280–314; these read APTT…ELSK, IQKH…APRV, and IRGT…TKGT. 2 stretches are compositionally biased toward basic and acidic residues: residues 137-146 and 153-165; these read KKFEDSEKAK and IETR…EKAK. S177 is modified (phosphoserine). The span at 217–238 shows a compositional bias: basic and acidic residues; it reads IQKHGKGLDKSSKSTKSDTPKE. A Phosphothreonine modification is found at T283. Phosphoserine occurs at positions 295, 296, and 297. Over residues 302–312 the composition is skewed to polar residues; that stretch reads ATQNTKPSATK. T303 carries the phosphothreonine modification. Residues 417-634 form an NG domain region; it reads YVVTFCGVNG…NAKAVVAALM (218 aa). Residues 423–430 and 518–522 each bind GTP; these read GVNGVGKS and DTAGR. Position 576 is a phosphothreonine (T576). 586 to 589 provides a ligand contact to GTP; sequence TKFD.

Belongs to the GTP-binding SRP family. As to quaternary structure, heterodimer with SRPRB. Interacts with the signal recognition particle (SRP) complex subunit SRP54.

It localises to the endoplasmic reticulum membrane. Its function is as follows. Component of the SRP (signal recognition particle) receptor. Ensures, in conjunction with the signal recognition particle, the correct targeting of the nascent secretory proteins to the endoplasmic reticulum membrane system. Forms a guanosine 5'-triphosphate (GTP)-dependent complex with the SRP subunit SRP54. SRP receptor compaction and GTPase rearrangement drive SRP-mediated cotranslational protein translocation into the ER. This Mus musculus (Mouse) protein is Signal recognition particle receptor subunit alpha.